A 570-amino-acid chain; its full sequence is Dihydroxy-acid dehydratase 2 (570 aa).

C51 is a [2Fe-2S] cluster binding site. A Mg(2+)-binding site is contributed by D83. C124 is a binding site for [2Fe-2S] cluster. Residues D125 and K126 each contribute to the Mg(2+) site. An N6-carboxylysine modification is found at K126. C196 is a [2Fe-2S] cluster binding site. E446 is a Mg(2+) binding site. The Proton acceptor role is filled by S472.

This sequence belongs to the IlvD/Edd family. As to quaternary structure, homodimer. It depends on [2Fe-2S] cluster as a cofactor. Requires Mg(2+) as cofactor.

It carries out the reaction (2R)-2,3-dihydroxy-3-methylbutanoate = 3-methyl-2-oxobutanoate + H2O. It catalyses the reaction (2R,3R)-2,3-dihydroxy-3-methylpentanoate = (S)-3-methyl-2-oxopentanoate + H2O. Its pathway is amino-acid biosynthesis; L-isoleucine biosynthesis; L-isoleucine from 2-oxobutanoate: step 3/4. The protein operates within amino-acid biosynthesis; L-valine biosynthesis; L-valine from pyruvate: step 3/4. Functionally, functions in the biosynthesis of branched-chain amino acids. Catalyzes the dehydration of (2R,3R)-2,3-dihydroxy-3-methylpentanoate (2,3-dihydroxy-3-methylvalerate) into 2-oxo-3-methylpentanoate (2-oxo-3-methylvalerate) and of (2R)-2,3-dihydroxy-3-methylbutanoate (2,3-dihydroxyisovalerate) into 2-oxo-3-methylbutanoate (2-oxoisovalerate), the penultimate precursor to L-isoleucine and L-valine, respectively. The polypeptide is Dihydroxy-acid dehydratase 2 (Bordetella bronchiseptica (strain ATCC BAA-588 / NCTC 13252 / RB50) (Alcaligenes bronchisepticus)).